We begin with the raw amino-acid sequence, 729 residues long: Fatty acid oxidation complex subunit alpha (729 aa).

The segment at 1 to 189 is enoyl-CoA hydratase/isomerase; that stretch reads MLYQGESLYL…KVGLVQAVVA (189 aa). Aspartate 296 is a substrate binding site. Residues 311-729 form a 3-hydroxyacyl-CoA dehydrogenase region; it reads PVPQQAAVLG…HADVSHGQPA (419 aa). Residues methionine 324, aspartate 343, 400–402, lysine 407, and serine 429 each bind NAD(+); that span reads VVE. The active-site For 3-hydroxyacyl-CoA dehydrogenase activity is the histidine 450. Position 453 (asparagine 453) interacts with NAD(+). Residues asparagine 500 and tyrosine 660 each coordinate substrate.

The protein in the N-terminal section; belongs to the enoyl-CoA hydratase/isomerase family. It in the C-terminal section; belongs to the 3-hydroxyacyl-CoA dehydrogenase family. In terms of assembly, heterotetramer of two alpha chains (FadB) and two beta chains (FadA).

The catalysed reaction is a (3S)-3-hydroxyacyl-CoA + NAD(+) = a 3-oxoacyl-CoA + NADH + H(+). It carries out the reaction a (3S)-3-hydroxyacyl-CoA = a (2E)-enoyl-CoA + H2O. The enzyme catalyses a 4-saturated-(3S)-3-hydroxyacyl-CoA = a (3E)-enoyl-CoA + H2O. It catalyses the reaction (3S)-3-hydroxybutanoyl-CoA = (3R)-3-hydroxybutanoyl-CoA. The catalysed reaction is a (3Z)-enoyl-CoA = a 4-saturated (2E)-enoyl-CoA. It carries out the reaction a (3E)-enoyl-CoA = a 4-saturated (2E)-enoyl-CoA. It participates in lipid metabolism; fatty acid beta-oxidation. In terms of biological role, involved in the aerobic and anaerobic degradation of long-chain fatty acids via beta-oxidation cycle. Catalyzes the formation of 3-oxoacyl-CoA from enoyl-CoA via L-3-hydroxyacyl-CoA. It can also use D-3-hydroxyacyl-CoA and cis-3-enoyl-CoA as substrate. This is Fatty acid oxidation complex subunit alpha from Pectobacterium atrosepticum (strain SCRI 1043 / ATCC BAA-672) (Erwinia carotovora subsp. atroseptica).